A 521-amino-acid polypeptide reads, in one-letter code: GMP synthase [glutamine-hydrolyzing] (521 aa).

The region spanning 9–203 is the Glutamine amidotransferase type-1 domain; it reads KILILDFGSQ…ISGICQCEKN (195 aa). Cysteine 86 functions as the Nucleophile in the catalytic mechanism. Catalysis depends on residues histidine 177 and glutamate 179. Residues 204–396 enclose the GMPS ATP-PPase domain; it reads WTTDNIIAKL…LSIPPHIIYR (193 aa). ATP is bound at residue 231-237; that stretch reads SGGVDSL.

As to quaternary structure, homodimer.

It carries out the reaction XMP + L-glutamine + ATP + H2O = GMP + L-glutamate + AMP + diphosphate + 2 H(+). It functions in the pathway purine metabolism; GMP biosynthesis; GMP from XMP (L-Gln route): step 1/1. Its function is as follows. Catalyzes the synthesis of GMP from XMP. This is GMP synthase [glutamine-hydrolyzing] from Ruthia magnifica subsp. Calyptogena magnifica.